A 155-amino-acid chain; its full sequence is UPF0461 protein C5orf24 homolog (155 aa).

Residues 60 to 69 (NETHLQTSTS) are compositionally biased toward polar residues. Residues 60–155 (NETHLQTSTS…QQALMCSSDA (96 aa)) are disordered. Residues 78–92 (LKKKKNVGRSGKRGR) show a composition bias toward basic residues. A compositionally biased stretch (polar residues) spans 94-107 (SGTTKSAGYRTSTG).

This sequence belongs to the UPF0461 family.

The chain is UPF0461 protein C5orf24 homolog from Xenopus laevis (African clawed frog).